The following is a 250-amino-acid chain: Aquaporin TIP2-1 (250 aa).

At Met-1 the chain carries N-acetylmethionine. The Cytoplasmic segment spans residues 1 to 20 (MAGVAFGSFDDSFSLASLRA). N-acetylalanine; in Aquaporin TIP2-1, N-terminally processed is present on Ala-2. A helical membrane pass occupies residues 21–41 (YLAEFISTLLFVFAGVGSAIA). Residues 42–54 (YAKLTSDAALDTP) are Vacuolar-facing. A helical membrane pass occupies residues 55–75 (GLVAIAVCHGFALFVAVAIGA). Residues 76-98 (NISGGHVNPAVTFGLAVGGQITV) are Cytoplasmic-facing. The short motif at 83 to 85 (NPA) is the NPA 1 element. Residues 99 to 119 (ITGVFYWIAQLLGSTAACFLL) form a helical membrane-spanning segment. Topologically, residues 120 to 141 (KYVTGGLAVPTHSVAAGLGSIE) are vacuolar. A helical transmembrane segment spans residues 142–162 (GVVMEIIITFALVYTVYATAA). Residues 163–168 (DPKKGS) are Cytoplasmic-facing. Residues 169 to 189 (LGTIAPLAIGLIVGANILAAG) traverse the membrane as a helical segment. Topologically, residues 190-215 (PFSGGSMNPARSFGPAVAAGDFSGHW) are vacuolar. An NPA 2 motif is present at residues 197-199 (NPA). The helical transmembrane segment at 216-236 (VYWVGPLIGGGLAGLIYGNVF) threads the bilayer. Topologically, residues 237–250 (MGSSEHVPLASADF) are cytoplasmic.

The protein belongs to the MIP/aquaporin (TC 1.A.8) family. TIP (TC 1.A.8.10) subfamily. In terms of assembly, interacts with cucumber mosaic virus (CMV) Protein 1a. As to expression, strongly expressed in shoot, rosette, bolt and flowers. Also expressed in roots, flower buds and above ground.

It localises to the vacuole membrane. Functionally, aquaporin required to facilitate the transport of water from the vacuolar compartment to the cytoplasm. Does not promote glycerol permeability. Its function is impaired by Hg(2+). Transports urea in yeast cells and Xenopus laevis oocytes in a pH-independent manner. Transports methylammonium or ammonium in yeast cells and Xenopus laevis oocytes, preferentially at high medium pH. May participate in vacuolar compartmentation and detoxification of ammonium. The polypeptide is Aquaporin TIP2-1 (TIP2-1) (Arabidopsis thaliana (Mouse-ear cress)).